The following is a 484-amino-acid chain: tRNA sulfurtransferase (484 aa).

The 105-residue stretch at 63-167 folds into the THUMP domain; it reads QAFGERLACI…GDKLYMVTKR (105 aa). Residues 185-186, Lys267, Gly289, and Gln298 contribute to the ATP site; that span reads LI. Cys346 and Cys458 are joined by a disulfide. The Rhodanese domain occupies 406–484; it reads IDTNEVVIDI…GYHNVKVYRP (79 aa). Cys458 functions as the Cysteine persulfide intermediate in the catalytic mechanism.

Belongs to the ThiI family.

It localises to the cytoplasm. The enzyme catalyses [ThiI sulfur-carrier protein]-S-sulfanyl-L-cysteine + a uridine in tRNA + 2 reduced [2Fe-2S]-[ferredoxin] + ATP + H(+) = [ThiI sulfur-carrier protein]-L-cysteine + a 4-thiouridine in tRNA + 2 oxidized [2Fe-2S]-[ferredoxin] + AMP + diphosphate. It catalyses the reaction [ThiS sulfur-carrier protein]-C-terminal Gly-Gly-AMP + S-sulfanyl-L-cysteinyl-[cysteine desulfurase] + AH2 = [ThiS sulfur-carrier protein]-C-terminal-Gly-aminoethanethioate + L-cysteinyl-[cysteine desulfurase] + A + AMP + 2 H(+). It participates in cofactor biosynthesis; thiamine diphosphate biosynthesis. Catalyzes the ATP-dependent transfer of a sulfur to tRNA to produce 4-thiouridine in position 8 of tRNAs, which functions as a near-UV photosensor. Also catalyzes the transfer of sulfur to the sulfur carrier protein ThiS, forming ThiS-thiocarboxylate. This is a step in the synthesis of thiazole, in the thiamine biosynthesis pathway. The sulfur is donated as persulfide by IscS. This is tRNA sulfurtransferase from Shewanella oneidensis (strain ATCC 700550 / JCM 31522 / CIP 106686 / LMG 19005 / NCIMB 14063 / MR-1).